A 132-amino-acid polypeptide reads, in one-letter code: Agouti-signaling protein (132 aa).

A signal peptide spans 1–22 (MDVTRLLLATLLVFLCFFAAYS). A glycan (N-linked (GlcNAc...) asparagine) is linked at asparagine 39. The disordered stretch occupies residues 61–93 (KISRKEAEKKRSSKKEASKQKVARPRTPLSVPC). The segment covering 64–79 (RKEAEKKRSSKKEASK) has biased composition (basic and acidic residues). Cystine bridges form between cysteine 93–cysteine 108, cysteine 100–cysteine 114, cysteine 107–cysteine 125, cysteine 111–cysteine 132, and cysteine 116–cysteine 123. Residues 93 to 132 (CVSTRGSCKPPAPACCHPCASCQCRFFRSACSCRVLNVNC) form the Agouti domain.

The protein localises to the secreted. Functionally, involved in the regulation of melanogenesis. The binding of ASP to MC1R precludes alpha-MSH initiated signaling and thus blocks production of cAMP, leading to a down-regulation of eumelanogenesis (brown/black pigment) and thus increasing synthesis of pheomelanin (yellow/red pigment). The chain is Agouti-signaling protein (ASIP) from Callithrix geoffroyi (Geoffroy's marmoset).